The following is a 413-amino-acid chain: Multifunctional CCA protein (413 aa).

The ATP site is built by G8 and R11. CTP is bound by residues G8 and R11. Positions 21 and 23 each coordinate Mg(2+). ATP contacts are provided by R91, R137, and R140. Positions 91, 137, and 140 each coordinate CTP. One can recognise an HD domain in the interval 228–329 (TGVHTLMTLS…VKLFDAIDAW (102 aa)).

This sequence belongs to the tRNA nucleotidyltransferase/poly(A) polymerase family. Bacterial CCA-adding enzyme type 1 subfamily. As to quaternary structure, monomer. Can also form homodimers and oligomers. Mg(2+) is required as a cofactor. Requires Ni(2+) as cofactor.

It carries out the reaction a tRNA precursor + 2 CTP + ATP = a tRNA with a 3' CCA end + 3 diphosphate. The enzyme catalyses a tRNA with a 3' CCA end + 2 CTP + ATP = a tRNA with a 3' CCACCA end + 3 diphosphate. Its function is as follows. Catalyzes the addition and repair of the essential 3'-terminal CCA sequence in tRNAs without using a nucleic acid template. Adds these three nucleotides in the order of C, C, and A to the tRNA nucleotide-73, using CTP and ATP as substrates and producing inorganic pyrophosphate. tRNA 3'-terminal CCA addition is required both for tRNA processing and repair. Also involved in tRNA surveillance by mediating tandem CCA addition to generate a CCACCA at the 3' terminus of unstable tRNAs. While stable tRNAs receive only 3'-terminal CCA, unstable tRNAs are marked with CCACCA and rapidly degraded. The sequence is that of Multifunctional CCA protein from Salmonella typhi.